Here is a 258-residue protein sequence, read N- to C-terminus: MQDWDPDLYRQFEAERTRPATDLLAHITITSPQFISDLGCGPGNSTELLHRRFPDAQLVGIDHSQAMLASAQQRLPHCTFVEADIHQWHPSQPQNLIYANASLQWLTDHPHLFPSLLSQLAPKGVLAVQMPDNLDQPSHRAMREVAENGPWQQTLQEAGATRAKVLSANHYYDLLAPHAERVDIWRTTYYHPMPSAQAIVDWLRATGLRPYLAPLTEAMQLAFLQNYLAIIDKAYPARTDGRRLLAFPRLFIVAHAQR.

Belongs to the methyltransferase superfamily. Tam family.

It is found in the cytoplasm. The catalysed reaction is trans-aconitate + S-adenosyl-L-methionine = (E)-3-(methoxycarbonyl)pent-2-enedioate + S-adenosyl-L-homocysteine. Functionally, catalyzes the S-adenosylmethionine monomethyl esterification of trans-aconitate. This Yersinia pseudotuberculosis serotype O:1b (strain IP 31758) protein is Trans-aconitate 2-methyltransferase.